The primary structure comprises 597 residues: Period protein homolog lin-42 (597 aa).

Residues 1–44 (MEPAGHSSATHNIVVPNANPTQPQPLAPAMREEGATLSPPNTWS) form a disordered region. A PAS domain is found at 155-223 (LQASHVSSNF…VRQAHIDLHN (69 aa)). Disordered regions lie at residues 313 to 335 (PVPS…QNQG), 418 to 450 (KSQS…EALT), 473 to 509 (DDVP…PPPG), and 555 to 597 (DGLL…DSQN). Residues 425–438 (SPAKQDEPFDEKKY) show a composition bias toward basic and acidic residues. The span at 487 to 497 (IHWTSSSQNHY) shows a compositional bias: polar residues. Over residues 561-577 (GATSTGGASPTSGTNSP) the composition is skewed to low complexity.

The protein resides in the nucleus. It localises to the cytoplasm. In terms of biological role, transcriptional repressor which interacts with the promoter region of target genes. Has a specific role in developmental timing where it regulates temporal expression of a number of miRNAs and mRNAs. Controls temporal cell fate transition during embryonic and early larval development by restricting the expression of specific miRNAs, including let-7, miR-48, lin-4, miR-35 and miR-58. Restricts the accumulation of lin-29 in the hypodermis to the larval L4 stage, thus controlling terminal differentiation of seam cells. Has a role in the miRNA-mediated specification of asymmetric gene expression patterns in gustatory neurons. May also regulate genes involved in other biological processes including transport, small molecule metabolism, and growth. Inhibits dauer formation, by antagonizing daf-12. Its function is as follows. Specifically required for maintaining the timing of larval development and molting cycle rhythms. The polypeptide is Period protein homolog lin-42 (Caenorhabditis elegans).